The primary structure comprises 267 residues: Low affinity immunoglobulin gamma Fc region receptor III (267 aa).

The first 36 residues, 1–36 (MTLETQMFQNAHSGSQWLLPPLTMLLLFAFADRQTA), serve as a signal peptide directing secretion. Residues 37 to 221 (NLPKAVVKRD…STSSLVWFHA (185 aa)) lie on the Extracellular side of the membrane. Ig-like C2-type domains lie at 39-121 (PKAV…EVIS) and 122-204 (DWLL…VTIT). Intrachain disulfides connect Cys62/Cys104 and Cys143/Cys187. Asn70, Asn78, Asn97, Asn171, and Asn178 each carry an N-linked (GlcNAc...) asparagine glycan. Residues 222–241 (AFCLVMCLLFAVDTGLYFCV) form a helical membrane-spanning segment. Over 242 to 267 (RRNLQTSGEDWRKSLSVGKYKAPQDK) the chain is Cytoplasmic.

As to quaternary structure, may form multisubunit complex with other heteroproteins. This association is required for efficient cell-surface expression. Does not associate with CD3 zeta. As to expression, expressed on natural killer cells and macrophages.

It is found in the cell membrane. Receptor for the Fc region of complexed immunoglobulins gamma. Low affinity receptor which binds to IgG1, IgG2a and IgG2b. Mediates neutrophil activation by IgG complexes redundantly with Fcgr4. The protein is Low affinity immunoglobulin gamma Fc region receptor III (Fcgr3) of Rattus norvegicus (Rat).